Consider the following 366-residue polypeptide: Peptide chain release factor 2 (366 aa).

Gln251 carries the post-translational modification N5-methylglutamine.

This sequence belongs to the prokaryotic/mitochondrial release factor family. Post-translationally, methylated by PrmC. Methylation increases the termination efficiency of RF2.

It is found in the cytoplasm. Peptide chain release factor 2 directs the termination of translation in response to the peptide chain termination codons UGA and UAA. This chain is Peptide chain release factor 2, found in Campylobacter lari (strain RM2100 / D67 / ATCC BAA-1060).